We begin with the raw amino-acid sequence, 344 residues long: Dimethyladenosine transferase 1, mitochondrial (344 aa).

The N-terminal 27 residues, 1 to 27, are a transit peptide targeting the mitochondrion; sequence MATPGALAKFRLPPLPTIGEIVKLFNL. Residues asparagine 36, leucine 38, glycine 63, glutamate 85, lysine 86, aspartate 111, isoleucine 112, and asparagine 141 each contribute to the S-adenosyl-L-methionine site.

It belongs to the class I-like SAM-binding methyltransferase superfamily. rRNA adenine N(6)-methyltransferase family. KsgA subfamily.

It is found in the mitochondrion. It catalyses the reaction adenosine(N)/adenosine(N+1) in rRNA + 4 S-adenosyl-L-methionine = N(6)-dimethyladenosine(N)/N(6)-dimethyladenosine(N+1) in rRNA + 4 S-adenosyl-L-homocysteine + 4 H(+). Its function is as follows. Mitochondrial methyltransferase which uses S-adenosyl methionine to dimethylate two highly conserved adjacent adenosine residues (A1583 and A1584) within the loop of helix 45 at the 3-prime end of 12S rRNA, thereby regulating the assembly or stability of the small subunit of the mitochondrial ribosome. Also required for basal transcription of mitochondrial DNA, probably via its interaction with POLRMT and TFAM. Stimulates transcription independently of the methyltransferase activity. In Xenopus laevis (African clawed frog), this protein is Dimethyladenosine transferase 1, mitochondrial (tfb1m.L).